The primary structure comprises 693 residues: Histone-lysine N-methyltransferase, H3 lysine-9 specific SUVH7 (693 aa).

Disordered stretches follow at residues 64–99 (WYDG…PPEM) and 111–175 (DSSN…AETE). The segment at residues 129-141 (KRGRGRPKGSKNS) is a DNA-binding region (a.T hook). Positions 227-373 (GAVPGIHVGD…FKEFRFKLVR (147 aa)) constitute a YDG domain. Residues 454 to 516 (QSLGCQNCRH…HCPTRLVQTG (63 aa)) enclose the Pre-SET domain. Zn(2+) is bound by residues cysteine 458, cysteine 461, cysteine 466, cysteine 471, cysteine 473, cysteine 498, cysteine 502, cysteine 504, and cysteine 508. Positions 519 to 660 (LHLEVFKTRN…PMTELTYDYG (142 aa)) constitute an SET domain. S-adenosyl-L-methionine-binding positions include 529–531 (CGW), aspartate 562, tyrosine 564, arginine 614, and 617–618 (NH). Residues cysteine 620, cysteine 681, cysteine 683, and cysteine 688 each contribute to the Zn(2+) site. Residues 677–693 (GKKTCLCGSVKCRGSFT) form the Post-SET domain.

It belongs to the class V-like SAM-binding methyltransferase superfamily. Histone-lysine methyltransferase family. Suvar3-9 subfamily.

Its subcellular location is the nucleus. It is found in the chromosome. The protein localises to the centromere. It catalyses the reaction N(6)-methyl-L-lysyl(9)-[histone H3] + S-adenosyl-L-methionine = N(6),N(6)-dimethyl-L-lysyl(9)-[histone H3] + S-adenosyl-L-homocysteine + H(+). The enzyme catalyses L-lysyl(9)-[histone H3] + S-adenosyl-L-methionine = N(6)-methyl-L-lysyl(9)-[histone H3] + S-adenosyl-L-homocysteine + H(+). Functionally, histone methyltransferase. Methylates 'Lys-9' of histone H3. H3 'Lys-9' methylation represents a specific tag for epigenetic transcriptional repression. In Arabidopsis thaliana (Mouse-ear cress), this protein is Histone-lysine N-methyltransferase, H3 lysine-9 specific SUVH7 (SUVH7).